Consider the following 327-residue polypeptide: Lipoyl synthase (327 aa).

The [4Fe-4S] cluster site is built by Cys-72, Cys-77, Cys-83, Cys-98, Cys-102, Cys-105, and Ser-313. The Radical SAM core domain occupies 83-302 (CWSHGTATIM…RRVGLEKGFL (220 aa)).

Belongs to the radical SAM superfamily. Lipoyl synthase family. Requires [4Fe-4S] cluster as cofactor.

It localises to the cytoplasm. The catalysed reaction is [[Fe-S] cluster scaffold protein carrying a second [4Fe-4S](2+) cluster] + N(6)-octanoyl-L-lysyl-[protein] + 2 oxidized [2Fe-2S]-[ferredoxin] + 2 S-adenosyl-L-methionine + 4 H(+) = [[Fe-S] cluster scaffold protein] + N(6)-[(R)-dihydrolipoyl]-L-lysyl-[protein] + 4 Fe(3+) + 2 hydrogen sulfide + 2 5'-deoxyadenosine + 2 L-methionine + 2 reduced [2Fe-2S]-[ferredoxin]. It participates in protein modification; protein lipoylation via endogenous pathway; protein N(6)-(lipoyl)lysine from octanoyl-[acyl-carrier-protein]: step 2/2. Catalyzes the radical-mediated insertion of two sulfur atoms into the C-6 and C-8 positions of the octanoyl moiety bound to the lipoyl domains of lipoate-dependent enzymes, thereby converting the octanoylated domains into lipoylated derivatives. The protein is Lipoyl synthase of Francisella philomiragia subsp. philomiragia (strain ATCC 25017 / CCUG 19701 / FSC 153 / O#319-036).